The following is a 177-amino-acid chain: Actinorhodin polyketide dimerase (177 aa).

To S.pristinaespiralis SnaC.

It functions in the pathway antibiotic biosynthesis; actinorhodin biosynthesis. This is Actinorhodin polyketide dimerase (actVB) from Streptomyces coelicolor (strain ATCC BAA-471 / A3(2) / M145).